A 163-amino-acid polypeptide reads, in one-letter code: Ureidoglycolate lyase 2 (163 aa).

Belongs to the ureidoglycolate lyase family. Homodimer. Requires Ni(2+) as cofactor.

The enzyme catalyses (S)-ureidoglycolate = urea + glyoxylate. The protein operates within nitrogen metabolism; (S)-allantoin degradation. In terms of biological role, catalyzes the catabolism of the allantoin degradation intermediate (S)-ureidoglycolate, generating urea and glyoxylate. Involved in the utilization of allantoin as nitrogen source. This is Ureidoglycolate lyase 2 from Rhizobium meliloti (strain 1021) (Ensifer meliloti).